Here is a 2137-residue protein sequence, read N- to C-terminus: Pecanex-like protein 2 (2137 aa).

2 helical membrane passes run 34–54 and 57–77; these read CHLY…LAFP and AIIV…IKLV. Disordered regions lie at residues 92–163, 225–251, 402–530, and 545–572; these read QQKP…LELS, NGKG…VDKG, EKTS…HARV, and SAEI…QMPN. Over residues 96 to 114 the composition is skewed to basic and acidic residues; the sequence is SRKEEKPNKDKEAKGEHIT. Over residues 116-125 the composition is skewed to polar residues; it reads HRNPSNNRQI. An N-linked (GlcNAc...) asparagine glycan is attached at Asn-136. The segment covering 146–156 has biased composition (polar residues); it reads SRGQSITSHHS. Residue Asn-449 is glycosylated (N-linked (GlcNAc...) asparagine). Basic and acidic residues predominate over residues 479 to 490; that stretch reads IKDHSSSSREPW. A compositionally biased stretch (polar residues) spans 510-520; sequence GQTNLDPSSCK. Asn-550, Asn-572, Asn-587, Asn-598, and Asn-613 each carry an N-linked (GlcNAc...) asparagine glycan. Residues 593 to 602 are compositionally biased toward polar residues; it reads ASSQLNGSAE. Residues 593–612 are disordered; it reads ASSQLNGSAEQNEESGLLRD. Disordered stretches follow at residues 621 to 655 and 740 to 763; these read EILE…CTQP and AREM…SGDP. Residues 630-655 show a composition bias toward polar residues; that stretch reads GHSSKQGKPDLQSQDHTSTGPACTQP. Residues 746–760 show a composition bias toward low complexity; it reads SSSSTTTSESQDPSS. 13 helical membrane passes run 844 to 864, 868 to 888, 901 to 921, 952 to 972, 983 to 1003, 1029 to 1049, 1099 to 1119, 1124 to 1144, 1193 to 1213, 1237 to 1257, 1265 to 1285, 1302 to 1322, and 1324 to 1344; these read LAIL…SQGF, MWVL…LKSV, QIIT…ILLL, YLIV…FPQI, IDML…VYSV, HIPA…YHLS, LIVC…TVFL, FLSI…HYVL, YILY…LISN, SFCN…FFHF, SFLL…DLLH, GSSF…MLFF, and TIAT…VIFI. N-linked (GlcNAc...) asparagine glycans are attached at residues Asn-1412, Asn-1553, and Asn-1818. The interval 1876–1958 is disordered; sequence RQHSGGNIED…RPPMLSSSGP (83 aa). Polar residues-rich tracts occupy residues 1901–1910, 1920–1929, and 1937–1958; these read SGGSQESSAE, GVSSCEGTQR, and SQSV…SSGP. A glycan (N-linked (GlcNAc...) asparagine) is linked at Asn-2054.

The protein belongs to the pecanex family.

It localises to the membrane. May play a role in tumorigenesis of colorectal carcinomas with high microsatellite instability (MSI-H). The polypeptide is Pecanex-like protein 2 (Homo sapiens (Human)).